Here is a 45-residue protein sequence, read N- to C-terminus: Large ribosomal subunit protein bL34 (45 aa).

The protein belongs to the bacterial ribosomal protein bL34 family.

The chain is Large ribosomal subunit protein bL34 from Beutenbergia cavernae (strain ATCC BAA-8 / DSM 12333 / CCUG 43141 / JCM 11478 / NBRC 16432 / NCIMB 13614 / HKI 0122).